A 161-amino-acid chain; its full sequence is Nucleotide-binding protein Plav_2177 (161 aa).

Belongs to the YajQ family.

Nucleotide-binding protein. The protein is Nucleotide-binding protein Plav_2177 of Parvibaculum lavamentivorans (strain DS-1 / DSM 13023 / NCIMB 13966).